Here is a 361-residue protein sequence, read N- to C-terminus: sn-glycerol-3-phosphate import ATP-binding protein UgpC (361 aa).

One can recognise an ABC transporter domain in the interval 4 to 235 (LSLKGVRKSY…PATVFVAGFI (232 aa)). ATP is bound at residue 37–44 (GPSGCGKS).

The protein belongs to the ABC transporter superfamily. sn-glycerol-3-phosphate importer (TC 3.A.1.1.3) family. In terms of assembly, the complex is composed of two ATP-binding proteins (UgpC), two transmembrane proteins (UgpA and UgpE) and a solute-binding protein (UgpB).

Its subcellular location is the cell inner membrane. The enzyme catalyses sn-glycerol 3-phosphate(out) + ATP + H2O = sn-glycerol 3-phosphate(in) + ADP + phosphate + H(+). In terms of biological role, part of the ABC transporter complex UgpBAEC involved in sn-glycerol-3-phosphate (G3P) import. Responsible for energy coupling to the transport system. The sequence is that of sn-glycerol-3-phosphate import ATP-binding protein UgpC from Burkholderia lata (strain ATCC 17760 / DSM 23089 / LMG 22485 / NCIMB 9086 / R18194 / 383).